The following is a 265-amino-acid chain: Glutamate racemase (265 aa).

Substrate is bound by residues 7-8 (DS) and 39-40 (YG). The Proton donor/acceptor role is filled by C70. Position 71 to 72 (71 to 72 (NT)) interacts with substrate. Catalysis depends on C182, which acts as the Proton donor/acceptor. 183–184 (TH) contributes to the substrate binding site.

Belongs to the aspartate/glutamate racemases family.

The catalysed reaction is L-glutamate = D-glutamate. The protein operates within cell wall biogenesis; peptidoglycan biosynthesis. Its function is as follows. Provides the (R)-glutamate required for cell wall biosynthesis. In Lachnospira eligens (strain ATCC 27750 / DSM 3376 / VPI C15-48 / C15-B4) (Eubacterium eligens), this protein is Glutamate racemase.